A 126-amino-acid polypeptide reads, in one-letter code: Fluoride-specific ion channel FluC (126 aa).

The next 4 membrane-spanning stretches (helical) occupy residues 4 to 24 (ILAIALGAAIGANLRYGIGLW), 35 to 55 (YGTFIINLLGCLGIGLLLTLI), 68 to 88 (MLVTGLLGGFTTFSTFGYESF), and 100 to 120 (IGYMVGSVVGGLIAVIIGVGL). Gly75 and Thr78 together coordinate Na(+).

Belongs to the fluoride channel Fluc/FEX (TC 1.A.43) family.

It is found in the cell membrane. The enzyme catalyses fluoride(in) = fluoride(out). Its activity is regulated as follows. Na(+) is not transported, but it plays an essential structural role and its presence is essential for fluoride channel function. Fluoride-specific ion channel. Important for reducing fluoride concentration in the cell, thus reducing its toxicity. This is Fluoride-specific ion channel FluC from Chloroflexus aurantiacus (strain ATCC 29366 / DSM 635 / J-10-fl).